The primary structure comprises 158 residues: NADH-quinone oxidoreductase subunit B (158 aa).

[4Fe-4S] cluster-binding residues include Cys37, Cys38, Cys102, and Cys132.

This sequence belongs to the complex I 20 kDa subunit family. NDH-1 is composed of 14 different subunits. Subunits NuoB, C, D, E, F, and G constitute the peripheral sector of the complex. The cofactor is [4Fe-4S] cluster.

Its subcellular location is the cell inner membrane. The enzyme catalyses a quinone + NADH + 5 H(+)(in) = a quinol + NAD(+) + 4 H(+)(out). In terms of biological role, NDH-1 shuttles electrons from NADH, via FMN and iron-sulfur (Fe-S) centers, to quinones in the respiratory chain. The immediate electron acceptor for the enzyme in this species is believed to be ubiquinone. Couples the redox reaction to proton translocation (for every two electrons transferred, four hydrogen ions are translocated across the cytoplasmic membrane), and thus conserves the redox energy in a proton gradient. The polypeptide is NADH-quinone oxidoreductase subunit B (Acidithiobacillus ferrooxidans (strain ATCC 23270 / DSM 14882 / CIP 104768 / NCIMB 8455) (Ferrobacillus ferrooxidans (strain ATCC 23270))).